The sequence spans 396 residues: Subtilisin-like protease 5 (396 aa).

The signal sequence occupies residues 1 to 20 (MTGFFTFLSFSLAALSVTNA). Positions 21–116 (AHILSVPKGA…VEPDAIISQH (96 aa)) are excised as a propeptide. The region spanning 37–113 (YIVVMKDDTS…VAFVEPDAII (77 aa)) is the Inhibitor I9 domain. An N-linked (GlcNAc...) asparagine glycan is attached at Asn-63. Positions 125–396 (PWGLSRLSNR…SRLLYNGSGR (272 aa)) constitute a Peptidase S8 domain. Residues Asp-156 and His-187 each act as charge relay system in the active site. 2 N-linked (GlcNAc...) asparagine glycosylation sites follow: Asn-230 and Asn-248. The Charge relay system role is filled by Ser-342. A compositionally biased stretch (polar residues) spans 376–389 (PTIRNPGPDTTSRL). The disordered stretch occupies residues 376–396 (PTIRNPGPDTTSRLLYNGSGR). A glycan (N-linked (GlcNAc...) asparagine) is linked at Asn-392.

The protein belongs to the peptidase S8 family.

The protein resides in the secreted. In terms of biological role, secreted subtilisin-like serine protease with keratinolytic activity that contributes to pathogenicity. The chain is Subtilisin-like protease 5 (SUB5) from Trichophyton tonsurans (Scalp ringworm fungus).